The primary structure comprises 514 residues: Mitochondrial-processing peptidase subunit alpha (514 aa).

Residues 1–55 (MLLRKSIPYIKICRDISASVRNNKEIAQKLPLSVPLPMENNSKSIEKGCPPMGRN) constitute a mitochondrion transit peptide.

Belongs to the peptidase M16 family. In terms of assembly, heterodimer of mppa-1 (alpha) and mppb-1 (beta) subunits, forming the mitochondrial processing protease (MPP) in which mppa-1 is involved in substrate recognition and binding and mppb-1 is the catalytic subunit.

Its subcellular location is the mitochondrion matrix. In terms of biological role, substrate recognition and binding subunit of the essential mitochondrial processing protease (MPP), which cleaves the mitochondrial sequence off newly imported precursors proteins. This is Mitochondrial-processing peptidase subunit alpha from Caenorhabditis elegans.